Reading from the N-terminus, the 518-residue chain is Probable inorganic carbon transporter subunit DabB (518 aa).

The next 13 helical transmembrane spans lie at 3-23, 37-57, 65-85, 114-134, 165-185, 207-227, 242-262, 264-284, 302-322, 358-378, 379-399, 403-423, and 442-462; these read MQWVGASMMLLIPVLFFLGSL, ISLLGLFLSMFLGIAVYFEWV, WVGVSKMSLVMLGLVCFIAFV, CVVTVIISNHMLVLMVAWIAI, AEACLLGAILILYYEHGTWFI, MLLALAALVKCAQLPLHGWLI, AGIINLGGYLLIIFAPLIVLS, MAQWILLIVGGITTVLAALVM, MGLMLVECALGLFELALLHLV, WWFAGIMSAAMVVGLIWLADL, SGPYSPWLLFAIAVTLLIAER, LTSSSVIGMVGLGVVLLVVYT, and WKGDLWIGFLLVMFMVGYFLL.

Belongs to the inorganic carbon transporter (TC 9.A.2) DabB family. As to quaternary structure, forms a complex with DabA.

The protein localises to the cell inner membrane. Its activity is regulated as follows. Intracellular DIC accumulation is sensitive to CCCP (carbonyl cyanide-m-chlorophenylhydrazone) and DCCD (N,N-dicyclohexylcarbodiimide) and therefore likely driven by either proton gradient, ATP, or both. In terms of biological role, part of an energy-coupled inorganic carbon pump involved in transport of dissolved inorganic carbon (DIC) with downstream gene dabA (Tcr_0854); has been suggested to be a proton-DIC symporter. In Hydrogenovibrio crunogenus (strain DSM 25203 / XCL-2) (Thiomicrospira crunogena), this protein is Probable inorganic carbon transporter subunit DabB.